A 249-amino-acid chain; its full sequence is tRNA (guanine-N(1)-)-methyltransferase (249 aa).

S-adenosyl-L-methionine-binding positions include G113 and 133 to 138; that span reads IGDFVL.

It belongs to the RNA methyltransferase TrmD family. As to quaternary structure, homodimer.

It is found in the cytoplasm. It catalyses the reaction guanosine(37) in tRNA + S-adenosyl-L-methionine = N(1)-methylguanosine(37) in tRNA + S-adenosyl-L-homocysteine + H(+). Functionally, specifically methylates guanosine-37 in various tRNAs. This chain is tRNA (guanine-N(1)-)-methyltransferase, found in Aliivibrio salmonicida (strain LFI1238) (Vibrio salmonicida (strain LFI1238)).